Here is a 183-residue protein sequence, read N- to C-terminus: UPF0134 protein MPN_100 (183 aa).

This sequence belongs to the UPF0134 family.

The sequence is that of UPF0134 protein MPN_100 from Mycoplasma pneumoniae (strain ATCC 29342 / M129 / Subtype 1) (Mycoplasmoides pneumoniae).